The primary structure comprises 283 residues: Bifunctional protein FolD (283 aa).

NADP(+) is bound by residues 166–168 (GAS) and I232.

It belongs to the tetrahydrofolate dehydrogenase/cyclohydrolase family. In terms of assembly, homodimer.

It carries out the reaction (6R)-5,10-methylene-5,6,7,8-tetrahydrofolate + NADP(+) = (6R)-5,10-methenyltetrahydrofolate + NADPH. It catalyses the reaction (6R)-5,10-methenyltetrahydrofolate + H2O = (6R)-10-formyltetrahydrofolate + H(+). The protein operates within one-carbon metabolism; tetrahydrofolate interconversion. Functionally, catalyzes the oxidation of 5,10-methylenetetrahydrofolate to 5,10-methenyltetrahydrofolate and then the hydrolysis of 5,10-methenyltetrahydrofolate to 10-formyltetrahydrofolate. In Wigglesworthia glossinidia brevipalpis, this protein is Bifunctional protein FolD.